A 144-amino-acid chain; its full sequence is Interleukin-3 (144 aa).

The first 17 residues, 1 to 17 (MSSLSILHLLLLLLALH), serve as a signal peptide directing secretion.

It belongs to the IL-3 family. Monomer.

The protein resides in the secreted. Granulocyte/macrophage colony-stimulating factors are cytokines that act in hematopoiesis by controlling the production, differentiation, and function of 2 related white cell populations of the blood, the granulocytes and the monocytes-macrophages. Its function is as follows. This CSF induces granulocytes, macrophages, mast cells, stem cells, erythroid cells, eosinophils and megakaryocytes. The sequence is that of Interleukin-3 (IL3) from Bos taurus (Bovine).